A 423-amino-acid polypeptide reads, in one-letter code: Serine hydroxymethyltransferase (423 aa).

(6S)-5,6,7,8-tetrahydrofolate is bound by residues leucine 120 and 124-126 (GHL). The residue at position 229 (lysine 229) is an N6-(pyridoxal phosphate)lysine. 353-355 (SPF) contacts (6S)-5,6,7,8-tetrahydrofolate.

It belongs to the SHMT family. As to quaternary structure, homodimer. It depends on pyridoxal 5'-phosphate as a cofactor.

It is found in the cytoplasm. It catalyses the reaction (6R)-5,10-methylene-5,6,7,8-tetrahydrofolate + glycine + H2O = (6S)-5,6,7,8-tetrahydrofolate + L-serine. Its pathway is one-carbon metabolism; tetrahydrofolate interconversion. It functions in the pathway amino-acid biosynthesis; glycine biosynthesis; glycine from L-serine: step 1/1. Its function is as follows. Catalyzes the reversible interconversion of serine and glycine with tetrahydrofolate (THF) serving as the one-carbon carrier. This reaction serves as the major source of one-carbon groups required for the biosynthesis of purines, thymidylate, methionine, and other important biomolecules. Also exhibits THF-independent aldolase activity toward beta-hydroxyamino acids, producing glycine and aldehydes, via a retro-aldol mechanism. The sequence is that of Serine hydroxymethyltransferase from Synechococcus sp. (strain RCC307).